A 229-amino-acid chain; its full sequence is Trypsin (229 aa).

Positions 1-7 are cleaved as a propeptide — activation peptide; that stretch reads APDDDDK. A Peptidase S1 domain is found at 8 to 227; the sequence is IVGGYECPKH…YVSWIHETIA (220 aa). 6 disulfides stabilise this stretch: Cys14–Cys143, Cys32–Cys48, Cys116–Cys216, Cys123–Cys189, Cys154–Cys168, and Cys179–Cys203. The Charge relay system role is filled by His47. The Ca(2+) site is built by Glu59 and Glu69. The active-site Charge relay system is Asp91. Ser183 functions as the Charge relay system in the catalytic mechanism.

This sequence belongs to the peptidase S1 family. It depends on Ca(2+) as a cofactor.

The protein resides in the secreted. Its subcellular location is the extracellular space. The enzyme catalyses Preferential cleavage: Arg-|-Xaa, Lys-|-Xaa.. This Squalus acanthias (Spiny dogfish) protein is Trypsin.